Reading from the N-terminus, the 148-residue chain is Single-stranded DNA-binding protein, mitochondrial (148 aa).

The transit peptide at 1 to 16 (MFRRPVLQVLRQFVRH) directs the protein to the mitochondrion. The SSB domain maps to 30-141 (LNRVHLLGRV…IIADNIIFLS (112 aa)). Ser67 and Ser79 each carry phosphoserine. Residue Lys113 is modified to N6-acetyllysine. Lys122 is modified (N6-succinyllysine).

Homotetramer. Interacts with MPG/AAG, through inhibition of its glycosylase activity it potentially prevents formation of DNA breaks in ssDNA, ensuring that base removal primarily occurs in dsDNA. Interacts with POLDIP2. Interacts with PRIMPOL.

The protein resides in the mitochondrion. Its subcellular location is the mitochondrion matrix. The protein localises to the mitochondrion nucleoid. Binds preferentially and cooperatively to pyrimidine rich single-stranded DNA (ss-DNA). In vitro, required to maintain the copy number of mitochondrial DNA (mtDNA) and plays a crucial role during mtDNA replication by stimulating the activity of the replisome components POLG and TWNK at the replication fork. Promotes the activity of the gamma complex polymerase POLG, largely by organizing the template DNA and eliminating secondary structures to favor ss-DNA conformations that facilitate POLG activity. In addition it is able to promote the 5'-3' unwinding activity of the mtDNA helicase TWNK. May also function in mtDNA repair. In Pongo abelii (Sumatran orangutan), this protein is Single-stranded DNA-binding protein, mitochondrial (SSBP1).